A 180-amino-acid chain; its full sequence is Beta-lactoglobulin (180 aa).

The N-terminal stretch at 1 to 18 is a signal peptide; it reads MKCLLLALGLALACGIQA. 3 disulfides stabilise this stretch: Cys-84–Cys-178, Cys-124–Cys-137, and Cys-124–Cys-139.

This sequence belongs to the calycin superfamily. Lipocalin family. As to quaternary structure, under physiological conditions beta-lactoglobulin exists as an equilibrium mixture of monomeric and dimeric forms. Interaction with LMBR1L is controversial. Alternate disulfide bonds occur in equal amounts. In terms of tissue distribution, synthesized in mammary gland and secreted in milk.

It localises to the secreted. In terms of biological role, primary component of whey, it binds retinol and is probably involved in the transport of that molecule. The protein is Beta-lactoglobulin (LGB) of Capra hircus (Goat).